The chain runs to 100 residues: Urease subunit gamma (100 aa).

It belongs to the urease gamma subunit family. In terms of assembly, heterotrimer of UreA (gamma), UreB (beta) and UreC (alpha) subunits. Three heterotrimers associate to form the active enzyme.

The protein resides in the cytoplasm. The enzyme catalyses urea + 2 H2O + H(+) = hydrogencarbonate + 2 NH4(+). It functions in the pathway nitrogen metabolism; urea degradation; CO(2) and NH(3) from urea (urease route): step 1/1. This chain is Urease subunit gamma, found in Nostoc punctiforme (strain ATCC 29133 / PCC 73102).